We begin with the raw amino-acid sequence, 142 residues long: Arginine vasopressin-induced protein 1 (142 aa).

2 disordered regions span residues 1–28 (MGTP…KQAS) and 74–142 (RLRR…QIRH). Residues 15-28 (QVSTPQTRGRKQAS) are compositionally biased toward polar residues. The segment covering 74-88 (RLRRKRPPKQNHCSR) has biased composition (basic residues). Residues 96–119 (STASDPQASTTDTASSEQSGNSRR) are compositionally biased toward polar residues.

In terms of biological role, may be involved in MAP kinase activation, epithelial sodium channel (ENaC) down-regulation and cell cycling. The polypeptide is Arginine vasopressin-induced protein 1 (Avpi1) (Mus musculus (Mouse)).